A 290-amino-acid chain; its full sequence is Ribonuclease 3 (290 aa).

The RNase III domain maps to 20-145 (YSCFYRILGF…FIGAIYLDRG (126 aa)). Glutamate 62 is a Mg(2+) binding site. Aspartate 66 is a catalytic residue. Mg(2+) is bound by residues asparagine 131 and glutamate 134. Glutamate 134 is a catalytic residue. Positions 173-242 (NFKSKLIEWS…AQMTLKKIKG (70 aa)) constitute a DRBM domain. Residues 254–290 (KTQNNVPAEDTTPESEMSLTAENQQIDEIISTEEISV) form a disordered region. Over residues 267–279 (ESEMSLTAENQQI) the composition is skewed to polar residues.

The protein belongs to the ribonuclease III family. As to quaternary structure, homodimer. Mg(2+) is required as a cofactor.

The protein localises to the cytoplasm. It carries out the reaction Endonucleolytic cleavage to 5'-phosphomonoester.. Its function is as follows. Digests double-stranded RNA. Involved in the processing of primary rRNA transcript to yield the immediate precursors to the large and small rRNAs (23S and 16S). Processes some mRNAs, and tRNAs when they are encoded in the rRNA operon. Processes pre-crRNA and tracrRNA of type II CRISPR loci if present in the organism. The polypeptide is Ribonuclease 3 (Bacteroides fragilis (strain YCH46)).